A 725-amino-acid chain; its full sequence is Glyoxysomal fatty acid beta-oxidation multifunctional protein MFP-a (725 aa).

The protein in the N-terminal section; belongs to the enoyl-CoA hydratase/isomerase family. In the central section; belongs to the 3-hydroxyacyl-CoA dehydrogenase family.

Its subcellular location is the glyoxysome. The enzyme catalyses a (3S)-3-hydroxyacyl-CoA = a (2E)-enoyl-CoA + H2O. The catalysed reaction is a 4-saturated-(3S)-3-hydroxyacyl-CoA = a (3E)-enoyl-CoA + H2O. It carries out the reaction a (3Z)-enoyl-CoA = a 4-saturated (2E)-enoyl-CoA. It catalyses the reaction a (3E)-enoyl-CoA = a 4-saturated (2E)-enoyl-CoA. The enzyme catalyses (3S)-3-hydroxybutanoyl-CoA = (3R)-3-hydroxybutanoyl-CoA. The catalysed reaction is a (3S)-3-hydroxyacyl-CoA + NAD(+) = a 3-oxoacyl-CoA + NADH + H(+). Its pathway is lipid metabolism; fatty acid beta-oxidation. The protein is Glyoxysomal fatty acid beta-oxidation multifunctional protein MFP-a of Cucumis sativus (Cucumber).